A 298-amino-acid polypeptide reads, in one-letter code: ATP phosphoribosyltransferase (298 aa).

The protein belongs to the ATP phosphoribosyltransferase family. Long subfamily. The cofactor is Mg(2+).

Its subcellular location is the cytoplasm. The catalysed reaction is 1-(5-phospho-beta-D-ribosyl)-ATP + diphosphate = 5-phospho-alpha-D-ribose 1-diphosphate + ATP. Its pathway is amino-acid biosynthesis; L-histidine biosynthesis; L-histidine from 5-phospho-alpha-D-ribose 1-diphosphate: step 1/9. Its activity is regulated as follows. Feedback inhibited by histidine. Its function is as follows. Catalyzes the condensation of ATP and 5-phosphoribose 1-diphosphate to form N'-(5'-phosphoribosyl)-ATP (PR-ATP). Has a crucial role in the pathway because the rate of histidine biosynthesis seems to be controlled primarily by regulation of HisG enzymatic activity. The sequence is that of ATP phosphoribosyltransferase from Aliivibrio fischeri (strain ATCC 700601 / ES114) (Vibrio fischeri).